We begin with the raw amino-acid sequence, 89 residues long: UPF0213 protein LMOf2365_0181 (89 aa).

In terms of domain architecture, GIY-YIG spans 5 to 80; it reads SEHFFYVLKC…KKLSRKNKDA (76 aa).

Belongs to the UPF0213 family.

This Listeria monocytogenes serotype 4b (strain F2365) protein is UPF0213 protein LMOf2365_0181.